The primary structure comprises 331 residues: DNA-directed RNA polymerase subunit alpha (331 aa).

Residues 1-223 (MDQKRPQLKA…DELTVFGNVE (223 aa)) are alpha N-terminal domain (alpha-NTD). An alpha C-terminal domain (alpha-CTD) region spans residues 260–331 (PYPADLDTPR…LAQFGLALRD (72 aa)).

It belongs to the RNA polymerase alpha chain family. Homodimer. The RNAP catalytic core consists of 2 alpha, 1 beta, 1 beta' and 1 omega subunit. When a sigma factor is associated with the core the holoenzyme is formed, which can initiate transcription.

The catalysed reaction is RNA(n) + a ribonucleoside 5'-triphosphate = RNA(n+1) + diphosphate. Functionally, DNA-dependent RNA polymerase catalyzes the transcription of DNA into RNA using the four ribonucleoside triphosphates as substrates. This Deinococcus geothermalis (strain DSM 11300 / CIP 105573 / AG-3a) protein is DNA-directed RNA polymerase subunit alpha.